A 331-amino-acid polypeptide reads, in one-letter code: ESX-3 secretion system protein EccE3 (331 aa).

2 helical membrane passes run 11–31 (GRVT…PWQS) and 37–57 (LLGV…GLYF).

The protein belongs to the EccE family. As to quaternary structure, part of the ESX-3 / type VII secretion system (T7SS), which is composed of cytosolic and membrane components. The ESX-3 membrane complex is composed of EccB3, EccC3, EccD3 and EccE3.

It is found in the cell inner membrane. In terms of biological role, part of the ESX-3 specialized secretion system, which is important for iron and zinc uptake or homeostasis. This Mycobacterium tuberculosis (strain ATCC 25618 / H37Rv) protein is ESX-3 secretion system protein EccE3.